The sequence spans 343 residues: Acetylglutamate kinase (343 aa).

Substrate contacts are provided by residues 98 to 99 (GG), R120, and N219.

It belongs to the acetylglutamate kinase family. ArgB subfamily.

It is found in the cytoplasm. It catalyses the reaction N-acetyl-L-glutamate + ATP = N-acetyl-L-glutamyl 5-phosphate + ADP. Its pathway is amino-acid biosynthesis; L-arginine biosynthesis; N(2)-acetyl-L-ornithine from L-glutamate: step 2/4. Catalyzes the ATP-dependent phosphorylation of N-acetyl-L-glutamate. This Frankia alni (strain DSM 45986 / CECT 9034 / ACN14a) protein is Acetylglutamate kinase.